The primary structure comprises 514 residues: 2,3-bisphosphoglycerate-independent phosphoglycerate mutase (514 aa).

Asp-14 and Ser-64 together coordinate Mn(2+). Ser-64 acts as the Phosphoserine intermediate in catalysis. Residues His-125, 155–156 (RD), Arg-187, Arg-193, 263–266 (RADR), and Lys-336 each bind substrate. Positions 403, 407, 444, 445, and 463 each coordinate Mn(2+).

The protein belongs to the BPG-independent phosphoglycerate mutase family. As to quaternary structure, monomer. It depends on Mn(2+) as a cofactor.

The catalysed reaction is (2R)-2-phosphoglycerate = (2R)-3-phosphoglycerate. The protein operates within carbohydrate degradation; glycolysis; pyruvate from D-glyceraldehyde 3-phosphate: step 3/5. Functionally, catalyzes the interconversion of 2-phosphoglycerate and 3-phosphoglycerate. The sequence is that of 2,3-bisphosphoglycerate-independent phosphoglycerate mutase from Shewanella sp. (strain ANA-3).